We begin with the raw amino-acid sequence, 901 residues long: Probable inorganic carbon transporter subunit DabA (901 aa).

Zn(2+) is bound by residues Cys-424, Asp-426, His-606, and Cys-621.

The protein belongs to the inorganic carbon transporter (TC 9.A.2) DabA family. In terms of assembly, forms a complex with DabB. Zn(2+) is required as a cofactor.

It localises to the cell membrane. Part of an energy-coupled inorganic carbon pump. The chain is Probable inorganic carbon transporter subunit DabA from Staphylococcus aureus (strain USA300).